Reading from the N-terminus, the 34-residue chain is Cytochrome c oxidase subunit 6B (34 aa).

Belongs to the cytochrome c oxidase subunit 6B family. As to quaternary structure, component of the cytochrome c oxidase (complex IV, CIV), a multisubunit enzyme composed of 14 subunits. The complex is composed of a catalytic core of 3 subunits MT-CO1, MT-CO2 and MT-CO3, encoded in the mitochondrial DNA, and 11 supernumerary subunits COX4I, COX5A, COX5B, COX6A, COX6B, COX6C, COX7A, COX7B, COX7C, COX8 and NDUFA4, which are encoded in the nuclear genome. The complex exists as a monomer or a dimer and forms supercomplexes (SCs) in the inner mitochondrial membrane with NADH-ubiquinone oxidoreductase (complex I, CI) and ubiquinol-cytochrome c oxidoreductase (cytochrome b-c1 complex, complex III, CIII), resulting in different assemblies (supercomplex SCI(1)III(2)IV(1) and megacomplex MCI(2)III(2)IV(2)). In terms of processing, the N-terminus is blocked.

It is found in the mitochondrion inner membrane. Its pathway is energy metabolism; oxidative phosphorylation. Its function is as follows. Component of the cytochrome c oxidase, the last enzyme in the mitochondrial electron transport chain which drives oxidative phosphorylation. The respiratory chain contains 3 multisubunit complexes succinate dehydrogenase (complex II, CII), ubiquinol-cytochrome c oxidoreductase (cytochrome b-c1 complex, complex III, CIII) and cytochrome c oxidase (complex IV, CIV), that cooperate to transfer electrons derived from NADH and succinate to molecular oxygen, creating an electrochemical gradient over the inner membrane that drives transmembrane transport and the ATP synthase. Cytochrome c oxidase is the component of the respiratory chain that catalyzes the reduction of oxygen to water. Electrons originating from reduced cytochrome c in the intermembrane space (IMS) are transferred via the dinuclear copper A center (CU(A)) of subunit 2 and heme A of subunit 1 to the active site in subunit 1, a binuclear center (BNC) formed by heme A3 and copper B (CU(B)). The BNC reduces molecular oxygen to 2 water molecules using 4 electrons from cytochrome c in the IMS and 4 protons from the mitochondrial matrix. The chain is Cytochrome c oxidase subunit 6B from Thunnus obesus (Bigeye tuna).